Here is a 355-residue protein sequence, read N- to C-terminus: Peptide chain release factor 1 (355 aa).

An N5-methylglutamine modification is found at Q231.

It belongs to the prokaryotic/mitochondrial release factor family. Post-translationally, methylated by PrmC. Methylation increases the termination efficiency of RF1.

It is found in the cytoplasm. Functionally, peptide chain release factor 1 directs the termination of translation in response to the peptide chain termination codons UAG and UAA. This Aliarcobacter butzleri (strain RM4018) (Arcobacter butzleri) protein is Peptide chain release factor 1.